The primary structure comprises 41 residues: uncharacterized protein (41 aa).

A compositionally biased stretch (basic and acidic residues) spans 1–12 (MTRNVVRQEFEA). A disordered region spans residues 1-23 (MTRNVVRQEFEAPGKPQDSSQQD).

This is an uncharacterized protein from Homo sapiens (Human).